The sequence spans 381 residues: Dual-specificity RNA methyltransferase RlmN (381 aa).

The Proton acceptor role is filled by Glu95. The region spanning 101 to 339 is the Radical SAM core domain; sequence DGRRGTLCVS…MTTVRTTRGD (239 aa). Cys108 and Cys345 are disulfide-bonded. [4Fe-4S] cluster-binding residues include Cys115, Cys119, and Cys122. Residues 169–170, Ser201, 223–225, and Asn302 each bind S-adenosyl-L-methionine; these read GE and SLH. The active-site S-methylcysteine intermediate is the Cys345.

It belongs to the radical SAM superfamily. RlmN family. Requires [4Fe-4S] cluster as cofactor.

Its subcellular location is the cytoplasm. The enzyme catalyses adenosine(2503) in 23S rRNA + 2 reduced [2Fe-2S]-[ferredoxin] + 2 S-adenosyl-L-methionine = 2-methyladenosine(2503) in 23S rRNA + 5'-deoxyadenosine + L-methionine + 2 oxidized [2Fe-2S]-[ferredoxin] + S-adenosyl-L-homocysteine. It carries out the reaction adenosine(37) in tRNA + 2 reduced [2Fe-2S]-[ferredoxin] + 2 S-adenosyl-L-methionine = 2-methyladenosine(37) in tRNA + 5'-deoxyadenosine + L-methionine + 2 oxidized [2Fe-2S]-[ferredoxin] + S-adenosyl-L-homocysteine. Specifically methylates position 2 of adenine 2503 in 23S rRNA and position 2 of adenine 37 in tRNAs. m2A2503 modification seems to play a crucial role in the proofreading step occurring at the peptidyl transferase center and thus would serve to optimize ribosomal fidelity. In Alcanivorax borkumensis (strain ATCC 700651 / DSM 11573 / NCIMB 13689 / SK2), this protein is Dual-specificity RNA methyltransferase RlmN.